The chain runs to 324 residues: 4-hydroxybenzoyl-CoA reductase subunit beta (324 aa).

The region spanning 2 to 217 (NILTDFRTHR…AAIEVPPTGA (216 aa)) is the FAD-binding PCMH-type domain. Residues 29-36 (PLGAGTDL), T111, N115, and Q118 contribute to the FAD site. [4Fe-4S] cluster contacts are provided by C122, C138, C146, and C155. FAD-binding residues include D162 and K224.

As to quaternary structure, heterohexamer of two alpha, two beta and two gamma subunits. FAD serves as cofactor. It depends on [4Fe-4S] cluster as a cofactor.

The enzyme catalyses oxidized 2[4Fe-4S]-[ferredoxin] + benzoyl-CoA + H2O = 4-hydroxybenzoyl-CoA + reduced 2[4Fe-4S]-[ferredoxin] + 2 H(+). Inactivated by low concentrations of cyanide in vitro. Its function is as follows. Component of a complex that catalyzes the reductive dehydroxylation of 4-hydroxybenzoyl-CoA to benzoyl-CoA. Reaction is not reversible. Is a key enzyme in the anaerobic degradation of phenolic compounds. The sequence is that of 4-hydroxybenzoyl-CoA reductase subunit beta (hcrB) from Thauera aromatica.